Reading from the N-terminus, the 64-residue chain is Large ribosomal subunit protein bL35 (64 aa).

This sequence belongs to the bacterial ribosomal protein bL35 family.

This Pelodictyon phaeoclathratiforme (strain DSM 5477 / BU-1) protein is Large ribosomal subunit protein bL35.